Consider the following 360-residue polypeptide: Photosystem II protein D1 1 (360 aa).

The Cytoplasmic portion of the chain corresponds to 2–31; the sequence is TTTLQRRESANLWERFCNWVTSTDNRLYVG. The helical transmembrane segment at 32–53 threads the bilayer; it reads WFGVIMIPTLLAATICFVIAFI. The Lumenal portion of the chain corresponds to 54–110; the sequence is AAPPVDIDGIREPVSGSLLYGNNIITGAVVPSSNAIGLHFYPIWEAASLDEWLYNGG. The chain crosses the membrane as a helical span at residues 111–132; it reads PYQLIIFHFLLGASCYMGRQWE. Residue His-118 coordinates chlorophyll a. The pheophytin a site is built by Tyr-126 and Gln-130. Residues 133 to 142 lie on the Cytoplasmic side of the membrane; the sequence is LSYRLGMRPW. The helical transmembrane segment at 143 to 163 threads the bilayer; it reads ICVAYSAPLASAFAVFLIYPI. Tyr-147 is a binding site for pheophytin a. Over 164 to 191 the chain is Lumenal; the sequence is GQGSFSDGMPLGISGTFNFMIVFQAEHN. Residues Asp-170 and Glu-189 each contribute to the [CaMn4O5] cluster site. The helical transmembrane segment at 192-217 threads the bilayer; sequence ILMHPFHQLGVAGVFGGALFCAMHGS. Position 198 (His-198) interacts with chlorophyll a. A quinone-binding positions include His-215 and 264 to 265; that span reads SF. Residue His-215 participates in Fe cation binding. At 218–272 the chain is on the cytoplasmic side; that stretch reads LVTSSLIRETTETESANYGYKFGQEEETYNIVAAHGYFGRLIFQYASFNNSRSLH. Fe cation is bound at residue His-272. Residues 273-295 form a helical membrane-spanning segment; that stretch reads FFLAAWPVVGVWFTALGISTMAF. Topologically, residues 296–344 are lumenal; the sequence is NLNGFNFNHSVIDAKGNVINTWADIINRANLGMEVMHERNAHNFPLDLA. The [CaMn4O5] cluster site is built by His-332, Glu-333, Asp-342, and Ala-344. The propeptide occupies 345–360; that stretch reads SAESAPVAMIAPSING.

Belongs to the reaction center PufL/M/PsbA/D family. As to quaternary structure, PSII is composed of 1 copy each of membrane proteins PsbA, PsbB, PsbC, PsbD, PsbE, PsbF, PsbH, PsbI, PsbJ, PsbK, PsbL, PsbM, PsbT, PsbX, PsbY, PsbZ, Psb30/Ycf12, peripheral proteins PsbO, CyanoQ (PsbQ), PsbU, PsbV and a large number of cofactors. It forms dimeric complexes. Precursor protein interacts with Ycf48. Part of a photosystem II (PSII) assembly intermediate complex PSII-I; crystallized from a strain deleted of psbJ, it forms monomeric PSII before addition of the oxygen evolving complex. PSII-I includes 3 assembly factors not found in mature PSII (Psb27, Psb28 and Psb34). In PSII-I the C-terminus of D1 (this subunit) is already processed but not yet found at its final position. It depends on The D1/D2 heterodimer binds P680, chlorophylls that are the primary electron donor of PSII, and subsequent electron acceptors. It shares a non-heme iron and each subunit binds pheophytin, quinone, additional chlorophylls, carotenoids and lipids. D1 provides most of the ligands for the Mn4-Ca-O5 cluster of the oxygen-evolving complex (OEC). There is also a Cl(-1) ion associated with D1 and D2, which is required for oxygen evolution. PSII binds additional chlorophylls, carotenoids and specific lipids. as a cofactor. C-terminally processed by CtpA; processing is essential to allow assembly of the oxygen-evolving complex and thus photosynthetic growth. Post-translationally, tyr-161 forms a radical intermediate that is referred to as redox-active TyrZ, YZ or Y-Z.

The protein localises to the cellular thylakoid membrane. The enzyme catalyses 2 a plastoquinone + 4 hnu + 2 H2O = 2 a plastoquinol + O2. Photosystem II (PSII) is a light-driven water:plastoquinone oxidoreductase that uses light energy to abstract electrons from H(2)O, generating O(2) and a proton gradient subsequently used for ATP formation. It consists of a core antenna complex that captures photons, and an electron transfer chain that converts photonic excitation into a charge separation. The D1/D2 (PsbA/PsbD) reaction center heterodimer binds P680, the primary electron donor of PSII as well as several subsequent electron acceptors. The protein is Photosystem II protein D1 1 of Thermosynechococcus vestitus (strain NIES-2133 / IAM M-273 / BP-1).